Consider the following 966-residue polypeptide: Isoleucine--tRNA ligase (966 aa).

The segment covering 1–16 (MSDDKRAKSDKNEKNK) has biased composition (basic and acidic residues). Residues 1-24 (MSDDKRAKSDKNEKNKYPVNLLDT) form a disordered region. A 'HIGH' region motif is present at residues 69–79 (PYANGDIHIGH). E599 contributes to the L-isoleucyl-5'-AMP binding site. A 'KMSKS' region motif is present at residues 640–644 (KMSKS). An ATP-binding site is contributed by K643. Zn(2+) is bound by residues C929, C932, C949, and C952.

The protein belongs to the class-I aminoacyl-tRNA synthetase family. IleS type 1 subfamily. In terms of assembly, monomer. It depends on Zn(2+) as a cofactor.

It is found in the cytoplasm. It carries out the reaction tRNA(Ile) + L-isoleucine + ATP = L-isoleucyl-tRNA(Ile) + AMP + diphosphate. Catalyzes the attachment of isoleucine to tRNA(Ile). As IleRS can inadvertently accommodate and process structurally similar amino acids such as valine, to avoid such errors it has two additional distinct tRNA(Ile)-dependent editing activities. One activity is designated as 'pretransfer' editing and involves the hydrolysis of activated Val-AMP. The other activity is designated 'posttransfer' editing and involves deacylation of mischarged Val-tRNA(Ile). In Cupriavidus taiwanensis (strain DSM 17343 / BCRC 17206 / CCUG 44338 / CIP 107171 / LMG 19424 / R1) (Ralstonia taiwanensis (strain LMG 19424)), this protein is Isoleucine--tRNA ligase.